The sequence spans 92 residues: Small ribosomal subunit protein bS20 (92 aa).

The tract at residues 1–23 (MANTPSAKKRAKQAEKRRSHNAS) is disordered. The span at 7 to 20 (AKKRAKQAEKRRSH) shows a compositional bias: basic residues.

Belongs to the bacterial ribosomal protein bS20 family.

Functionally, binds directly to 16S ribosomal RNA. This chain is Small ribosomal subunit protein bS20, found in Pseudomonas savastanoi pv. phaseolicola (strain 1448A / Race 6) (Pseudomonas syringae pv. phaseolicola (strain 1448A / Race 6)).